A 90-amino-acid chain; its full sequence is DNA-binding protein HU-alpha (90 aa).

Belongs to the bacterial histone-like protein family. Heterodimer of an alpha and a beta chain.

Histone-like DNA-binding protein which is capable of wrapping DNA to stabilize it, and thus to prevent its denaturation under extreme environmental conditions. The protein is DNA-binding protein HU-alpha (hupA) of Vibrio proteolyticus (Aeromonas proteolytica).